The following is a 67-amino-acid chain: KEGYLVNHSTGCKYECFKLGDNDYCLRECRQGYGKGAGGYCYAFGCWCTHLYEQAVVWPLPKKTCNA.

An LCN-type CS-alpha/beta domain is found at 1-66; the sequence is KEGYLVNHST…VWPLPKKTCN (66 aa). 4 cysteine pairs are disulfide-bonded: cysteine 12–cysteine 65, cysteine 16–cysteine 41, cysteine 25–cysteine 46, and cysteine 29–cysteine 48.

It belongs to the long (4 C-C) scorpion toxin superfamily. Sodium channel inhibitor family. Beta subfamily. As to expression, expressed by the venom gland.

It is found in the secreted. Beta toxins bind at site-4 of sodium channels and shift the voltage of activation toward more negative potentials thereby affecting sodium channel activation and promoting spontaneous and repetitive firing. This toxin is active against mammals and lethal to mice. Selectively modulates Nav1.4/SCN4A, a sodium channel present in both denervated and innervated skeletal muscle. In Centruroides elegans (Bark scorpion), this protein is Beta-mammal toxin CeII9.